Consider the following 253-residue polypeptide: Type III pantothenate kinase (253 aa).

ATP is bound at residue 6–13 (DVGNTNTV). Residue 103–106 (GADR) coordinates substrate. Aspartate 105 (proton acceptor) is an active-site residue. Aspartate 125 is a K(+) binding site. Threonine 128 provides a ligand contact to ATP. Threonine 180 is a substrate binding site.

It belongs to the type III pantothenate kinase family. Homodimer. It depends on NH4(+) as a cofactor. Requires K(+) as cofactor.

The protein localises to the cytoplasm. The enzyme catalyses (R)-pantothenate + ATP = (R)-4'-phosphopantothenate + ADP + H(+). It functions in the pathway cofactor biosynthesis; coenzyme A biosynthesis; CoA from (R)-pantothenate: step 1/5. Catalyzes the phosphorylation of pantothenate (Pan), the first step in CoA biosynthesis. In Parafrankia sp. (strain EAN1pec), this protein is Type III pantothenate kinase.